Consider the following 787-residue polypeptide: Protein FAM149A (787 aa).

7 disordered regions span residues 22-105, 144-175, 189-226, 238-284, 432-455, 573-602, and 665-697; these read SPAV…SSGA, GSNS…APGP, EEWT…PTNF, ASES…SWRD, DGDE…GLPP, LQQR…ASSR, and AVQT…SYRG. Over residues 37–46 the composition is skewed to polar residues; the sequence is SVDSGASTSL. Low complexity-rich tracts occupy residues 51–65 and 96–105; these read TLTL…TAAS and SGSLPSSSGA. Residues 144–155 show a composition bias toward polar residues; sequence GSNSVTASSPRN. Residues 189 to 200 show a composition bias toward acidic residues; it reads EEWTSDSDSQDD. Residues 201-220 are compositionally biased toward basic and acidic residues; sequence PEGRGLSEGLRKQSSEKSKD. A compositionally biased stretch (low complexity) spans 239-250; it reads SESPSSFSSSGS. Residues 251 to 261 are compositionally biased toward polar residues; that stretch reads RTPTEAHNSWP. Over residues 262-274 the composition is skewed to low complexity; that stretch reads GSSTQSSTTGLST.

The protein belongs to the FAM149 family.

The sequence is that of Protein FAM149A (Fam149a) from Mus musculus (Mouse).